Consider the following 206-residue polypeptide: Oligoribonuclease (206 aa).

The Exonuclease domain occupies 20 to 183 (LVWLDMEMTG…ADIHESIDEL (164 aa)). Tyr-141 is an active-site residue.

Belongs to the oligoribonuclease family.

The protein resides in the cytoplasm. In terms of biological role, 3'-to-5' exoribonuclease specific for small oligoribonucleotides. The polypeptide is Oligoribonuclease (Burkholderia cenocepacia (strain HI2424)).